The chain runs to 184 residues: Photosystem I assembly protein Ycf4 (184 aa).

Helical transmembrane passes span 19 to 39 (ISNF…LLVG) and 57 to 77 (IIFF…LFIS).

The protein belongs to the Ycf4 family.

It is found in the plastid. Its subcellular location is the chloroplast thylakoid membrane. In terms of biological role, seems to be required for the assembly of the photosystem I complex. This Nicotiana sylvestris (Wood tobacco) protein is Photosystem I assembly protein Ycf4.